The sequence spans 56 residues: MAVQQNKPTRSKRGMRRSHDALTTSTVSVDKASGETHLRHHITADGFYRGRKVIAK.

Positions 1–34 are disordered; the sequence is MAVQQNKPTRSKRGMRRSHDALTTSTVSVDKASG.

This sequence belongs to the bacterial ribosomal protein bL32 family.

In Sodalis glossinidius (strain morsitans), this protein is Large ribosomal subunit protein bL32.